Consider the following 205-residue polypeptide: Holliday junction branch migration complex subunit RuvA (205 aa).

The tract at residues 1 to 64 (MIGRLRGLLV…EDAQLLYGFI (64 aa)) is domain I. Residues 65 to 143 (TKQERALFRL…SLMEASHGNE (79 aa)) are domain II. The flexible linker stretch occupies residues 144 to 156 (REFVLQSNYTPAP). Residues 157–205 (VVNTAEEDAISALLALGYKPAQASKAVSSVFEEGMDSETLIKASLKSML) are domain III.

The protein belongs to the RuvA family. As to quaternary structure, homotetramer. Forms an RuvA(8)-RuvB(12)-Holliday junction (HJ) complex. HJ DNA is sandwiched between 2 RuvA tetramers; dsDNA enters through RuvA and exits via RuvB. An RuvB hexamer assembles on each DNA strand where it exits the tetramer. Each RuvB hexamer is contacted by two RuvA subunits (via domain III) on 2 adjacent RuvB subunits; this complex drives branch migration. In the full resolvosome a probable DNA-RuvA(4)-RuvB(12)-RuvC(2) complex forms which resolves the HJ.

It is found in the cytoplasm. Its function is as follows. The RuvA-RuvB-RuvC complex processes Holliday junction (HJ) DNA during genetic recombination and DNA repair, while the RuvA-RuvB complex plays an important role in the rescue of blocked DNA replication forks via replication fork reversal (RFR). RuvA specifically binds to HJ cruciform DNA, conferring on it an open structure. The RuvB hexamer acts as an ATP-dependent pump, pulling dsDNA into and through the RuvAB complex. HJ branch migration allows RuvC to scan DNA until it finds its consensus sequence, where it cleaves and resolves the cruciform DNA. In Shewanella loihica (strain ATCC BAA-1088 / PV-4), this protein is Holliday junction branch migration complex subunit RuvA.